We begin with the raw amino-acid sequence, 383 residues long: uncharacterized protein (383 aa).

Residues 1-55 (MSSKLTVNAHYSPLKDEDPLDHIDSQTALDSMETDSTGKSSLYFSKSDDPLSKDI) are disordered. The segment covering 13–24 (PLKDEDPLDHID) has biased composition (basic and acidic residues). The segment covering 25 to 44 (SQTALDSMETDSTGKSSLYF) has biased composition (polar residues). Over residues 46–55 (KSDDPLSKDI) the composition is skewed to basic and acidic residues. The next 10 helical transmembrane spans lie at 87–107 (LTIF…TILN), 112–132 (NIIN…SLMV), 157–177 (FIFV…FVPV), 179–199 (FYQI…FVLL), 205–225 (LFPF…VRFE), 228–248 (VAPI…IESV), 262–282 (LIYI…VASL), 299–319 (FFIV…ATFT), 329–349 (YMIS…AFLG), and 352–372 (LYGN…LYTL).

This sequence belongs to the TPT transporter family.

The protein resides in the membrane. This is an uncharacterized protein from Schizosaccharomyces pombe (strain 972 / ATCC 24843) (Fission yeast).